Here is a 289-residue protein sequence, read N- to C-terminus: Extracellular ribonuclease (289 aa).

Positions 1–24 (MTKKLWFLPIVCLFFILGWTAPSA) are cleaved as a signal peptide. A propeptide spanning residues 25–51 (SAGAPADTNLYSRLAVSTAGGTTLFPQ) is cleaved from the precursor. Residues 177–197 (FDNGGSEYPKAPGNYYDGDSW) form a disordered region.

The protein localises to the secreted. Mg(2+)-activated ribonuclease which hydrolyzes RNA apparently nonspecifically into oligonucleotides with 5'-terminal phosphate. This is Extracellular ribonuclease (bsn) from Bacillus amyloliquefaciens (Bacillus velezensis).